A 236-amino-acid chain; its full sequence is Mitochondrial inner membrane protease ATP23 (236 aa).

His-136 contributes to the a divalent metal cation binding site. The active site involves Glu-137. His-140 contributes to the a divalent metal cation binding site.

It belongs to the peptidase M76 family.

It is found in the mitochondrion inner membrane. Functionally, has a dual role in the assembly of mitochondrial ATPase. Acts as a protease that removes N-terminal residues of mitochondrial ATPase CF(0) subunit 6 at the intermembrane space side. Also involved in the correct assembly of the membrane-embedded ATPase CF(0) particle, probably mediating association of subunit 6 with the subunit 9 ring. This chain is Mitochondrial inner membrane protease ATP23 (ATP23), found in Debaryomyces hansenii (strain ATCC 36239 / CBS 767 / BCRC 21394 / JCM 1990 / NBRC 0083 / IGC 2968) (Yeast).